The sequence spans 889 residues: Exocyst complex component 1 (889 aa).

Phosphoserine is present on residues S145 and S148. Residues R156–I269 adopt a coiled-coil conformation. S456 carries the phosphoserine modification.

It belongs to the SEC3 family. In terms of assembly, the exocyst complex is composed of Sec3/Exoc1, Sec5/Exoc2, Sec6/Exoc3, Sec8/Exoc4, Sec10/Exoc5, Sec15/Exoc6, Exo70/Exoc7 and Exo84/Exoc8.

Functionally, component of the exocyst complex involved in the docking of exocytic vesicles with fusion sites on the plasma membrane. The chain is Exocyst complex component 1 from Drosophila melanogaster (Fruit fly).